Here is a 202-residue protein sequence, read N- to C-terminus: Hydrogenase expression/formation protein HupD (202 aa).

Ni(2+) contacts are provided by E28, D74, and H105.

The protein belongs to the peptidase A31 family.

Functionally, not known. Could be involved in the processing of hydrogenase. In Rhizobium leguminosarum bv. viciae, this protein is Hydrogenase expression/formation protein HupD (hupD).